The primary structure comprises 266 residues: Type 1 encapsulin shell protein (266 aa).

It belongs to the encapsulin family. Family 1 subfamily. Homomultimeric. This encapsulin nanocompartment is formed by 60 subunits, and encloses one Dyp homohexamer; partially assembled 58-subunit compartments with and without cargo are also purified. May assemble the shell from dimers. Monomers form pentamers, which assemble to form hollow shells with pores 5-8 Angstroms in diameter where 3 pentamers meet.

It localises to the encapsulin nanocompartment. Functionally, shell component of a type 1 encapsulin nanocompartment. Assembles into proteinaceous shells 23-24 nm in diameter with 2-2.5 nm thick walls. Endogenous cargo protein DyP (dye-decolorizing peroxidase) is targeted to the interior via its C-terminal extension; only 1 DyP hexamer is incorporated into each shell. Empty shells can be isolated in the absence of cargo. Cargo encapsulation probably precedes assembly of the nanocompartment; may assemble or disassemble via dimers, subcomplexes with a distinct preference for even numbers of subunits are detected. Nanocompartments are stable against mechanical forces; loaded nanocompartments are less stable than empty ones. Nanocompartments are stable between pH 5-10; they aggregate at pH 9-10 and start to disassemble at pH 11. They are stable in 1M NaCl, 1 M MgCl(2) and 1M CaCl(2), unstable in 20% DMSO (dimethylsulfoxide) and are stable in 20% but not 40% ethanol. The sequence is that of Type 1 encapsulin shell protein from Brevibacterium linens.